The following is a 150-amino-acid chain: MQVILLDKVANLGSLGDQVNVKAGYARNFLVPQGKAVPATKKNVEFFEVRRAELEAKLAEILTAAEARATKINELGSVTIASKSGDEGKLFGSIGTRDIADAVTAAGVEVAKSEVRLPNGVLRTTGEHEVQFQVHSDVFAQLNVVVVAEA.

This sequence belongs to the bacterial ribosomal protein bL9 family.

Binds to the 23S rRNA. This Serratia proteamaculans (strain 568) protein is Large ribosomal subunit protein bL9.